A 348-amino-acid polypeptide reads, in one-letter code: Protein RecA (348 aa).

69–76 (GPESSGKT) contributes to the ATP binding site.

It belongs to the RecA family.

It is found in the cytoplasm. Can catalyze the hydrolysis of ATP in the presence of single-stranded DNA, the ATP-dependent uptake of single-stranded DNA by duplex DNA, and the ATP-dependent hybridization of homologous single-stranded DNAs. It interacts with LexA causing its activation and leading to its autocatalytic cleavage. This Picosynechococcus sp. (strain ATCC 27264 / PCC 7002 / PR-6) (Agmenellum quadruplicatum) protein is Protein RecA.